The chain runs to 493 residues: Ribose import ATP-binding protein RbsA (493 aa).

ABC transporter domains are found at residues 3–239 (IEMK…VGRE) and 246–493 (KRTP…TGGR). Residue 35–42 (GENGAGKS) coordinates ATP.

This sequence belongs to the ABC transporter superfamily. Ribose importer (TC 3.A.1.2.1) family. As to quaternary structure, the complex is composed of an ATP-binding protein (RbsA), two transmembrane proteins (RbsC) and a solute-binding protein (RbsB).

It localises to the cell membrane. It carries out the reaction D-ribose(out) + ATP + H2O = D-ribose(in) + ADP + phosphate + H(+). Part of the ABC transporter complex RbsABC involved in ribose import. Responsible for energy coupling to the transport system. The protein is Ribose import ATP-binding protein RbsA of Bacillus subtilis (strain 168).